The primary structure comprises 423 residues: Endochitinase 1 (423 aa).

An N-terminal signal peptide occupies residues 1–22 (MPSLFAQSLAIIATLQATLGLA). One can recognise a GH18 domain in the interval 39 to 401 (YVNAVYFTNW…GTSSNKLGGP (363 aa)). N-linked (GlcNAc...) asparagine glycosylation is found at N74, N78, and N96. Chitin contacts are provided by residues 103 to 104 (GT) and 130 to 133 (GGWT). Catalysis depends on E172, which acts as the Proton donor. Residues Y173 and 238–241 (MAYD) each bind chitin. N248 carries N-linked (GlcNAc...) asparagine glycosylation. W378 contacts chitin. A disordered region spans residues 380–423 (ASSDRSGSQSLIGTSSNKLGGPDSTENLLNYPDSKYDNMRKQMA). Polar residues predominate over residues 383-407 (DRSGSQSLIGTSSNKLGGPDSTENL). Positions 413-423 (SKYDNMRKQMA) are enriched in basic and acidic residues.

The protein belongs to the glycosyl hydrolase 18 family. Chitinase class V subfamily.

Its subcellular location is the secreted. It carries out the reaction Random endo-hydrolysis of N-acetyl-beta-D-glucosaminide (1-&gt;4)-beta-linkages in chitin and chitodextrins.. In terms of biological role, secreted chitinase involved in the degradation of chitin, a component of the cell walls of fungi and exoskeletal elements of some animals (including worms and arthropods). Participates in the infection process and directly acts in the penetration process of the host cuticle. The protein is Endochitinase 1 (chit1) of Metarhizium anisopliae (Entomophthora anisopliae).